The following is a 206-amino-acid chain: Ribosomal RNA small subunit methyltransferase G (206 aa).

S-adenosyl-L-methionine is bound by residues Gly-73, Leu-78, 124 to 125, and Arg-139; that span reads VE.

Belongs to the methyltransferase superfamily. RNA methyltransferase RsmG family.

It localises to the cytoplasm. The catalysed reaction is guanosine(527) in 16S rRNA + S-adenosyl-L-methionine = N(7)-methylguanosine(527) in 16S rRNA + S-adenosyl-L-homocysteine. In terms of biological role, specifically methylates the N7 position of guanine in position 527 of 16S rRNA. The chain is Ribosomal RNA small subunit methyltransferase G from Serratia proteamaculans (strain 568).